Here is a 409-residue protein sequence, read N- to C-terminus: Translation initiation factor 2 subunit gamma (409 aa).

Residues 6–203 (QPEVNIGLVG…AVQSEIPTPE (198 aa)) form the tr-type G domain. Residues 15–22 (GHVDHGKT) form a G1 region. Mg(2+) contacts are provided by Asp-18, Thr-22, Gly-43, and Ser-45. 18–23 (DHGKTT) lines the GTP pocket. The interval 43 to 47 (GISIR) is G2. Positions 90-93 (DAPG) are G3. GTP-binding positions include 146–149 (NKVD) and 181–183 (SAG). The segment at 146 to 149 (NKVD) is G4. Residues 181-183 (SAG) form a G5 region.

The protein belongs to the TRAFAC class translation factor GTPase superfamily. Classic translation factor GTPase family. EIF2G subfamily. As to quaternary structure, heterotrimer composed of an alpha, a beta and a gamma chain. The cofactor is Mg(2+).

It catalyses the reaction GTP + H2O = GDP + phosphate + H(+). In terms of biological role, eIF-2 functions in the early steps of protein synthesis by forming a ternary complex with GTP and initiator tRNA. The sequence is that of Translation initiation factor 2 subunit gamma from Haloarcula marismortui (strain ATCC 43049 / DSM 3752 / JCM 8966 / VKM B-1809) (Halobacterium marismortui).